A 259-amino-acid polypeptide reads, in one-letter code: Ovulation prohormone (259 aa).

A signal peptide spans 1-34 (MKMSGLLSKPDYGVVGIVFTVVFCCWCSSSTTHA). Positions 35 to 102 (LSIAEPGRDR…SGEKTRLTAA (68 aa)) are excised as a propeptide. The interval 42–103 (RDRYDKRSPT…GEKTRLTAAK (62 aa)) is disordered. 2 consecutive repeats follow at residues 119–123 (RLRFH) and 146–150 (RLRFH). Residues 119–150 (RLRFHKRRVDSADESNDDGFDRKAREPRLRFH) are 2 X 5 AA repeats of R-L-R-F-H. A disordered region spans residues 149–197 (FHDVRKRSATAEEGSENAEIEESHLGNSRSRRSAGSAPSSANEVQRSKR). Positions 181 to 195 (SAGSAPSSANEVQRS) are excised as a propeptide. Leu-233 is subject to Leucine amide. The propeptide occupies 237–259 (GSAFFDHIPIIFGEPQYDYQPFK).

The protein belongs to the molluscan ELH family.

The protein resides in the secreted. In terms of biological role, CDCH induces ovulation and egg-mass production; it may also stimulate synthesis of secretory products in the female accessory sex glands and affect neurons in the neuronal circuits controlling locomotion and feeding. Functionally, calfluxin is involved in the influx of calcium into mitochondria of the albumen gland. CDCA (or alpha-CDCP) triggers the electrical activity of the caudodorsal cells (CDCS). This chain is Ovulation prohormone, found in Lymnaea stagnalis (Great pond snail).